The sequence spans 159 residues: Putative pre-16S rRNA nuclease (159 aa).

This sequence belongs to the YqgF nuclease family.

The protein resides in the cytoplasm. Its function is as follows. Could be a nuclease involved in processing of the 5'-end of pre-16S rRNA. The sequence is that of Putative pre-16S rRNA nuclease from Agrobacterium fabrum (strain C58 / ATCC 33970) (Agrobacterium tumefaciens (strain C58)).